Consider the following 545-residue polypeptide: ATP synthase subunit alpha (545 aa).

Position 174–181 (174–181 (GDRKTGKT)) interacts with ATP.

It belongs to the ATPase alpha/beta chains family. F-type ATPases have 2 components, CF(1) - the catalytic core - and CF(0) - the membrane proton channel. CF(1) has five subunits: alpha(3), beta(3), gamma(1), delta(1), epsilon(1). CF(0) has three main subunits: a(1), b(2) and c(9-12). The alpha and beta chains form an alternating ring which encloses part of the gamma chain. CF(1) is attached to CF(0) by a central stalk formed by the gamma and epsilon chains, while a peripheral stalk is formed by the delta and b chains.

It is found in the cell membrane. It carries out the reaction ATP + H2O + 4 H(+)(in) = ADP + phosphate + 5 H(+)(out). Its function is as follows. Produces ATP from ADP in the presence of a proton gradient across the membrane. The alpha chain is a regulatory subunit. The polypeptide is ATP synthase subunit alpha (Cutibacterium acnes (strain DSM 16379 / KPA171202) (Propionibacterium acnes)).